The chain runs to 439 residues: Ornithine aminotransferase, mitochondrial (439 aa).

The N-terminal 25 residues, 1 to 25 (MFSKLAHLQRFAVLSRGVHSSVASA), are a transit peptide targeting the mitochondrion; in hepatic form. A mitochondrion; in renal form-targeting transit peptide spans 1–35 (MFSKLAHLQRFAVLSRGVHSSVASATSVATKKTVQ). Lys-49 and Lys-66 each carry N6-acetyllysine. Lys-102 carries the N6-succinyllysine modification. N6-acetyllysine; alternate is present on Lys-107. Lys-107 carries the post-translational modification N6-succinyllysine; alternate. N6-(pyridoxal phosphate)lysine is present on Lys-292. Lys-362 carries the N6-acetyllysine; alternate modification. Lys-362 is modified (N6-succinyllysine; alternate). Residues Lys-386 and Lys-392 each carry the N6-acetyllysine modification. Position 405 is an N6-acetyllysine; alternate (Lys-405). Lys-405 carries the post-translational modification N6-succinyllysine; alternate. An N6-acetyllysine modification is found at Lys-421.

This sequence belongs to the class-III pyridoxal-phosphate-dependent aminotransferase family. Homohexamer. Requires pyridoxal 5'-phosphate as cofactor.

The protein resides in the mitochondrion matrix. The enzyme catalyses L-ornithine + 2-oxoglutarate = L-glutamate 5-semialdehyde + L-glutamate. The protein operates within amino-acid biosynthesis; L-proline biosynthesis; L-glutamate 5-semialdehyde from L-ornithine: step 1/1. Catalyzes the reversible interconversion of L-ornithine and 2-oxoglutarate to L-glutamate semialdehyde and L-glutamate. This chain is Ornithine aminotransferase, mitochondrial (OAT), found in Homo sapiens (Human).